A 268-amino-acid polypeptide reads, in one-letter code: Tryptophan synthase alpha chain (268 aa).

Catalysis depends on proton acceptor residues Glu49 and Asp60.

This sequence belongs to the TrpA family. In terms of assembly, tetramer of two alpha and two beta chains.

The catalysed reaction is (1S,2R)-1-C-(indol-3-yl)glycerol 3-phosphate + L-serine = D-glyceraldehyde 3-phosphate + L-tryptophan + H2O. Its pathway is amino-acid biosynthesis; L-tryptophan biosynthesis; L-tryptophan from chorismate: step 5/5. Functionally, the alpha subunit is responsible for the aldol cleavage of indoleglycerol phosphate to indole and glyceraldehyde 3-phosphate. The polypeptide is Tryptophan synthase alpha chain (Escherichia coli (strain SMS-3-5 / SECEC)).